The chain runs to 223 residues: ATP-dependent Clp protease proteolytic subunit 2 (223 aa).

Ser118 (nucleophile) is an active-site residue. Residue His143 is part of the active site.

It belongs to the peptidase S14 family. As to quaternary structure, fourteen ClpP subunits assemble into 2 heptameric rings which stack back to back to give a disk-like structure with a central cavity, resembling the structure of eukaryotic proteasomes.

The protein resides in the cytoplasm. It catalyses the reaction Hydrolysis of proteins to small peptides in the presence of ATP and magnesium. alpha-casein is the usual test substrate. In the absence of ATP, only oligopeptides shorter than five residues are hydrolyzed (such as succinyl-Leu-Tyr-|-NHMec, and Leu-Tyr-Leu-|-Tyr-Trp, in which cleavage of the -Tyr-|-Leu- and -Tyr-|-Trp bonds also occurs).. In terms of biological role, cleaves peptides in various proteins in a process that requires ATP hydrolysis. Has a chymotrypsin-like activity. Plays a major role in the degradation of misfolded proteins. The sequence is that of ATP-dependent Clp protease proteolytic subunit 2 from Leifsonia xyli subsp. xyli (strain CTCB07).